The primary structure comprises 219 residues: 3-dehydroquinate dehydratase (219 aa).

Residues 34-36 and Arg63 each bind 3-dehydroquinate; that span reads ELR. His114 (proton donor/acceptor) is an active-site residue. The Schiff-base intermediate with substrate role is filled by Lys139. 3 residues coordinate 3-dehydroquinate: Arg174, Thr193, and Gln197.

This sequence belongs to the type-I 3-dehydroquinase family. As to quaternary structure, homodimer.

It carries out the reaction 3-dehydroquinate = 3-dehydroshikimate + H2O. It participates in metabolic intermediate biosynthesis; chorismate biosynthesis; chorismate from D-erythrose 4-phosphate and phosphoenolpyruvate: step 3/7. Its function is as follows. Involved in the third step of the chorismate pathway, which leads to the biosynthesis of aromatic amino acids. Catalyzes the cis-dehydration of 3-dehydroquinate (DHQ) and introduces the first double bond of the aromatic ring to yield 3-dehydroshikimate. This is 3-dehydroquinate dehydratase from Sulfolobus acidocaldarius (strain ATCC 33909 / DSM 639 / JCM 8929 / NBRC 15157 / NCIMB 11770).